The primary structure comprises 299 residues: 33 kDa chaperonin (299 aa).

2 disulfide bridges follow: Cys-234-Cys-236 and Cys-268-Cys-271.

The protein belongs to the HSP33 family. Post-translationally, under oxidizing conditions two disulfide bonds are formed involving the reactive cysteines. Under reducing conditions zinc is bound to the reactive cysteines and the protein is inactive.

It is found in the cytoplasm. Functionally, redox regulated molecular chaperone. Protects both thermally unfolding and oxidatively damaged proteins from irreversible aggregation. Plays an important role in the bacterial defense system toward oxidative stress. The polypeptide is 33 kDa chaperonin (Pseudomonas putida (strain ATCC 47054 / DSM 6125 / CFBP 8728 / NCIMB 11950 / KT2440)).